Consider the following 34-residue polypeptide: Phalloidin proprotein (34 aa).

A propeptide spanning residues Met1–Pro10 is cleaved from the precursor. The segment at residues Ala11 to Pro17 is a cross-link (cyclopeptide (Ala-Pro)). Residues Trp12–Cys16 constitute a cross-link (2'-cysteinyl-6'-hydroxytryptophan sulfoxide (Trp-Cys)). The propeptide occupies Cys18 to Cys34.

The protein belongs to the MSDIN fungal toxin family. Post-translationally, processed by the macrocyclase-peptidase enzyme POPB to yield a toxic cyclic heptapeptide. POPB first removes 10 residues from the N-terminus. Conformational trapping of the remaining peptide forces the enzyme to release this intermediate rather than proceed to macrocyclization. The enzyme rebinds the remaining peptide in a different conformation and catalyzes macrocyclization of the N-terminal 7 residues.

Its function is as follows. Toxin that belongs to the bicyclic heptapeptides called phallotoxins. Although structurally related to amatoxins, phallotoxins have a different mode of action, which is the stabilization of F-actin. Phallotoxins are poisonous when administered parenterally, but not orally because of poor absorption. This chain is Phalloidin proprotein, found in Amanita phalloides (Death cap).